The chain runs to 319 residues: Large ribosomal subunit protein uL10 (319 aa).

Residues 289 to 319 (EQKSAAPAAKEEAPKEDSEESDEDMGFGLFD) form a disordered region.

It belongs to the universal ribosomal protein uL10 family. P0 forms a pentameric complex by interaction with dimers of P1 and P2. Post-translationally, phosphorylated.

The protein localises to the nucleus. The protein resides in the cytoplasm. Ribosomal protein P0 is the functional equivalent of E.coli protein L10. The polypeptide is Large ribosomal subunit protein uL10 (rplp0) (Danio rerio (Zebrafish)).